Reading from the N-terminus, the 949-residue chain is Zinc finger CCHC domain-containing protein 14 (949 aa).

Disordered stretches follow at residues 25–44, 59–92, 200–221, 236–262, 355–457, and 739–779; these read SSLN…PGGA, EAPV…LGKH, STSS…LSKV, AGIP…LPHC, KEKS…DKEK, and PESS…PQPA. The span at 28 to 43 shows a compositional bias: gly residues; sequence NGGGGHGGKGAPGPGG. Over residues 61-78 the composition is skewed to polar residues; the sequence is PVSSVSNSLENALHTSAH. The segment covering 200–219 has biased composition (low complexity); it reads STSSPPQQLQSPSPGNPSLS. Residues 395-411 show a composition bias toward basic and acidic residues; sequence HAAELRVEVEQPHHQLP. Positions 416–425 are enriched in low complexity; the sequence is SSEYSSSSSS. Positions 431–457 are enriched in basic and acidic residues; it reads AREESSDSAEENDRRVEIHLESSDKEK. The CCHC-type zinc finger occupies 906 to 923; sequence LSCYNCGATGHRAQDCKQ.

In Homo sapiens (Human), this protein is Zinc finger CCHC domain-containing protein 14 (ZCCHC14).